A 55-amino-acid chain; its full sequence is Large ribosomal subunit protein bL33 (55 aa).

It belongs to the bacterial ribosomal protein bL33 family.

The polypeptide is Large ribosomal subunit protein bL33 (Orientia tsutsugamushi (strain Boryong) (Rickettsia tsutsugamushi)).